The following is an 87-amino-acid chain: Cytochrome c6 (87 aa).

Residues Cys-10, Cys-13, His-14, and Met-56 each coordinate heme c.

The protein belongs to the cytochrome c family. PetJ subfamily. As to quaternary structure, monomer. In terms of processing, binds 1 heme c group covalently per subunit.

It is found in the plastid. The protein resides in the chloroplast thylakoid lumen. Functionally, functions as an electron carrier between membrane-bound cytochrome b6-f and photosystem I in oxygenic photosynthesis. The chain is Cytochrome c6 (petJ) from Euglena viridis (Cercaria viridis).